Reading from the N-terminus, the 495-residue chain is Carbohydrate oxidase (495 aa).

Residues 1–22 (MRSAFILALGLITASADALVTR) form the signal peptide. One can recognise an FAD-binding PCMH-type domain in the interval 55–229 (LPYIPTAIAQ…AVWKLATFPA (175 aa)). A cross-link (6-(S-cysteinyl)-8alpha-(pros-histidyl)-FAD (His-Cys)) is located at residues 92–154 (HSYASFGFGG…YGRAISHGTC (63 aa)). N-linked (GlcNAc...) asparagine glycans are attached at residues Asn244 and Asn417.

It belongs to the oxygen-dependent FAD-linked oxidoreductase family. The cofactor is FAD. In terms of processing, the FAD cofactor is bound via a bicovalent 6-S-cysteinyl, 8alpha-N1-histidyl FAD linkage.

The protein localises to the secreted. The enzyme catalyses beta-D-glucose + O2 = D-glucono-1,5-lactone + H2O2. It carries out the reaction D-galactose + O2 = D-galactono-1,5-lactone + H2O2. It catalyses the reaction D-cellobiose + O2 = D-cellobiono-1,5-lactone + H2O2. The catalysed reaction is beta-lactose + O2 = lactobiono-1,5-lactone + H2O2. The enzyme catalyses D-maltose + O2 = D-maltobiono-1,5-lactone + H2O2. It carries out the reaction D-xylose + O2 = D-xylono-1,5-lactone + H2O2. Functionally, catalyzes the selective oxidation of C1 hydroxyl moieties on mono-, oligo- and polysaccharides with concomitant reduction of molecular oxygen to hydrogen peroxide. This results in the formation of the corresponding lactones, which typically undergo spontaneous hydrolysis. Carbohydrate oxidase is able to oxidize a variety of substrates including D-glucose, D-galactose, D-xylose, D-maltose, D-cellobiose, and lactose. In addition, among various oligosaccharides, the enzyme preferred tetrameric dextrins, indicating a favorable interaction of four linked glucose units with the substrate binding pocket. The polypeptide is Carbohydrate oxidase (Microdochium nivale (Pink snow mold)).